A 65-amino-acid polypeptide reads, in one-letter code: Large ribosomal subunit protein uL30 (65 aa).

It belongs to the universal ribosomal protein uL30 family. As to quaternary structure, part of the 50S ribosomal subunit.

This Chloroflexus aurantiacus (strain ATCC 29366 / DSM 635 / J-10-fl) protein is Large ribosomal subunit protein uL30.